The chain runs to 61 residues: Photosystem II reaction center protein Z (61 aa).

The next 2 membrane-spanning stretches (helical) occupy residues 8-28 and 41-61; these read ALLVLVLYSLLLVVAVPVLFS and LVGSLLWVLMVIGVGVLSFFK.

It belongs to the PsbZ family. PSII is composed of 1 copy each of membrane proteins PsbA, PsbB, PsbC, PsbD, PsbE, PsbF, PsbH, PsbI, PsbJ, PsbK, PsbL, PsbM, PsbT, PsbX, PsbY, PsbZ, Psb30/Ycf12, peripheral proteins PsbO, CyanoQ (PsbQ), PsbU, PsbV and a large number of cofactors. It forms dimeric complexes.

The protein localises to the cellular thylakoid membrane. In terms of biological role, may control the interaction of photosystem II (PSII) cores with the light-harvesting antenna, regulates electron flow through the 2 photosystem reaction centers. PSII is a light-driven water plastoquinone oxidoreductase, using light energy to abstract electrons from H(2)O, generating a proton gradient subsequently used for ATP formation. This chain is Photosystem II reaction center protein Z, found in Synechococcus sp. (strain JA-3-3Ab) (Cyanobacteria bacterium Yellowstone A-Prime).